We begin with the raw amino-acid sequence, 500 residues long: Probable glycine dehydrogenase (decarboxylating) subunit 2 (500 aa).

The tract at residues 1–25 (MLIFEHSRPGRRNYSQSPKAAEATD) is disordered. At K263 the chain carries N6-(pyridoxal phosphate)lysine.

It belongs to the GcvP family. C-terminal subunit subfamily. In terms of assembly, the glycine cleavage system is composed of four proteins: P, T, L and H. In this organism, the P 'protein' is a heterodimer of two subunits. Pyridoxal 5'-phosphate is required as a cofactor.

It carries out the reaction N(6)-[(R)-lipoyl]-L-lysyl-[glycine-cleavage complex H protein] + glycine + H(+) = N(6)-[(R)-S(8)-aminomethyldihydrolipoyl]-L-lysyl-[glycine-cleavage complex H protein] + CO2. In terms of biological role, the glycine cleavage system catalyzes the degradation of glycine. The P protein binds the alpha-amino group of glycine through its pyridoxal phosphate cofactor; CO(2) is released and the remaining methylamine moiety is then transferred to the lipoamide cofactor of the H protein. In Nitrosospira multiformis (strain ATCC 25196 / NCIMB 11849 / C 71), this protein is Probable glycine dehydrogenase (decarboxylating) subunit 2.